We begin with the raw amino-acid sequence, 694 residues long: MIAHLLCILSYNFNTSVILNVYSKLTMFCTTNTLPMDLLLKQGSLKQEVESFCYQIVSESNDQKVGILQSENEQLQPSVSKKSEGELSRVKFMSSSNKITTFSKKPKRRKYDESYLSFGFTYFGNRDAPHAQCVLCKKILSNSSLAPSKLRRHLETKHAAYKDKDISFFKQHLDSPENNKPPTPKIVNTDNESATEASYNVSYHIALSGEAHTIGELLIKPCAKDVVMRMFDEQYSKKIDAVQLSNSTVARRIKDLAADIEEELVCRLKICDGFSLQLDESADVSGLAVLLVFVRYRFNKSIEEDLLLCESLQSNATGEEIFNCINSFMQKHEIEWEKCVDVCSDASRAMDGKIAEAVTLIKYVAPESTSSHCLLYRHALAVKIMPTSLKNVLDQAVQIINYIKARPHQSRLLKILCEEMGAQHTALLLNTEVRWLSRGKVLVRLFELRRELLVFMDSAFRLSDCLTNSSWLLRLAYLADIFTKLNEVNLSMQGKNVTVFTVFDKMSSLLRKLEFWASSVEEENFDCFPTLSDFLTEINSTVDKDICSAIVQHLRGLRSTLLKYFPVTNDNNTWVRNPFTVTVKPASLVARDYESLIDLTSDSQVKQNFSELSLNDFWSSLIQEYPSIARRAVRVLLPFATMHLCETGFSYYAATKTKYRKRLDAAPHMRIRLSNITPNIKRICDKKTQKHCSH.

Residues 109 to 165 form a BED-type zinc finger; sequence RKYDESYLSFGFTYFGNRDAPHAQCVLCKKILSNSSLAPSKLRRHLETKHAAYKDKD. 4 residues coordinate Zn(2+): C133, C136, H153, and H158.

This chain is Zinc finger BED domain-containing protein 5 (ZBED5), found in Canis lupus familiaris (Dog).